The primary structure comprises 54 residues: Ovomucoid (54 aa).

The Kazal-like domain occupies 4–54 (VDCSDYPKPVCSLDYMPLCGSDNTTYNNKCIFCNAVVDSNGTITLSHFGKC). Intrachain disulfides connect Cys-6–Cys-36, Cys-14–Cys-33, and Cys-22–Cys-54. Residue Asn-43 is glycosylated (N-linked (GlcNAc...) asparagine).

It localises to the secreted. This is Ovomucoid from Haemorhous mexicanus (House finch).